Here is a 130-residue protein sequence, read N- to C-terminus: Small ribosomal subunit protein eS6 (130 aa).

Belongs to the eukaryotic ribosomal protein eS6 family.

In Methanosphaera stadtmanae (strain ATCC 43021 / DSM 3091 / JCM 11832 / MCB-3), this protein is Small ribosomal subunit protein eS6.